The primary structure comprises 375 residues: All-trans-retinol dehydrogenase [NAD(+)] ADH1B (375 aa).

Serine 2 bears the N-acetylserine mark. Serine 23 carries the post-translational modification Phosphoserine. At tyrosine 35 the chain carries Phosphotyrosine. Zn(2+)-binding residues include cysteine 47, histidine 68, cysteine 98, cysteine 101, cysteine 104, cysteine 112, and cysteine 175. NAD(+) contacts are provided by residues 200-205 (GLGGVG), aspartate 224, lysine 229, 293-295 (VGV), and arginine 370.

Belongs to the zinc-containing alcohol dehydrogenase family. As to quaternary structure, homodimer or heterodimer of closely related subunits. Zn(2+) is required as a cofactor. In terms of tissue distribution, expressed in liver.

The protein localises to the cytoplasm. It carries out the reaction all-trans-retinol + NAD(+) = all-trans-retinal + NADH + H(+). The enzyme catalyses all-trans-4-hydroxyretinol + NAD(+) = all-trans-4-hydroxyretinal + NADH + H(+). The catalysed reaction is all-trans-4-oxoretinol + NAD(+) = all-trans-4-oxoretinal + NADH + H(+). In terms of biological role, catalyzes the NAD-dependent oxidation of all-trans-retinol and its derivatives such as all-trans-4-hydroxyretinol and may participate in retinoid metabolism. In vitro can also catalyze the NADH-dependent reduction of all-trans-retinal and its derivatives such as all-trans-4-oxoretinal. Catalyzes in the oxidative direction with higher efficiency. Has the same affinity for all-trans-4-hydroxyretinol and all-trans-4-oxoretinal. In Papio hamadryas (Hamadryas baboon), this protein is All-trans-retinol dehydrogenase [NAD(+)] ADH1B.